We begin with the raw amino-acid sequence, 490 residues long: Interferon-induced protein with tetratricopeptide repeats 3 (490 aa).

TPR repeat units lie at residues 51 to 84 (ATMY…IQQE), 94 to 127 (LVTW…CKKF), 136 to 169 (SELD…KPNN), 172 to 206 (FSSG…SPDN), 207 to 240 (QYVK…APCQ), and 241 to 274 (TDVL…TPNN). Phosphoserine is present on Ser-203. A disordered region spans residues 386–409 (LSISKKSTDKEEIKDQPQNVSENL). The segment covering 391–400 (KSTDKEEIKD) has biased composition (basic and acidic residues). TPR repeat units lie at residues 415 to 448 (PNYW…LLRD) and 450 to 481 (PSGI…SPRE). The interval 467–490 (SEEMGQGAVSSSPRELLSNSEQLN) is disordered. A compositionally biased stretch (polar residues) spans 474–490 (AVSSSPRELLSNSEQLN). Ser-478 is modified (phosphoserine).

It belongs to the IFIT family. Component of an interferon-dependent multiprotein complex, at least composed of IFIT1, IFIT2 and IFIT3. Interacts with IFIT1 and IFIT2. Interacts (via N-terminus) with MAVS, TBK1, TRAF6 and RIGI. Interacts with COPS5.

It is found in the cytoplasm. It localises to the mitochondrion. Its function is as follows. IFN-induced antiviral protein which acts as an inhibitor of cellular as well as viral processes, cell migration, proliferation, signaling, and viral replication. Enhances MAVS-mediated host antiviral responses by serving as an adapter bridging TBK1 to MAVS which leads to the activation of TBK1 and phosphorylation of IRF3 and phosphorylated IRF3 translocates into nucleus to promote antiviral gene transcription. Exhibits an antiproliferative activity via the up-regulation of cell cycle negative regulators CDKN1A/p21 and CDKN1B/p27. Normally, CDKN1B/p27 turnover is regulated by COPS5, which binds CDKN1B/p27 in the nucleus and exports it to the cytoplasm for ubiquitin-dependent degradation. IFIT3 sequesters COPS5 in the cytoplasm, thereby increasing nuclear CDKN1B/p27 protein levels. Up-regulates CDKN1A/p21 by down-regulating MYC, a repressor of CDKN1A/p21. Can negatively regulate the apoptotic effects of IFIT2. In Pan troglodytes (Chimpanzee), this protein is Interferon-induced protein with tetratricopeptide repeats 3 (IFIT3).